The following is a 282-amino-acid chain: Snake venom serine protease NaSP (282 aa).

Positions 1–18 are cleaved as a signal peptide; it reads MVLIRVLASLLILQLSYS. The propeptide occupies 19 to 56; that stretch reads KSLDDGAKESAYDDEIQQSSWGNSTVNTTLTETVVIQL. Residues N41 and N45 are each glycosylated (N-linked (GlcNAc...) asparagine). Residues 57-280 form the Peptidase S1 domain; that stretch reads IMGGSECYKS…YIDWIRGIIA (224 aa). 5 disulfides stabilise this stretch: C63–C195, C82–C98, C174–C241, C206–C220, and C231–C256. Residue H97 is the Charge relay system of the active site. A glycan (N-linked (GlcNAc...) asparagine) is linked at N135. D142 acts as the Charge relay system in catalysis. N-linked (GlcNAc...) asparagine glycans are attached at residues N149 and N153. The active-site Charge relay system is S235.

The protein belongs to the peptidase S1 family. Snake venom subfamily. In terms of assembly, monomer. As to expression, expressed by the venom gland.

It is found in the secreted. Snake venom serine protease that may act in the hemostasis system of the prey. This chain is Snake venom serine protease NaSP, found in Naja atra (Chinese cobra).